The sequence spans 401 residues: Elongation factor Tu (401 aa).

In terms of domain architecture, tr-type G spans 10-209 (KPHINVGTIG…AVDEYIPTPQ (200 aa)). Residues 19–26 (GHVDHGKT) are G1. 19–26 (GHVDHGKT) lines the GTP pocket. Thr26 lines the Mg(2+) pocket. Residues 60–64 (GITIA) are G2. Residues 81-84 (DCPG) are G3. Residues 81-85 (DCPGH) and 136-139 (NKVD) each bind GTP. The tract at residues 136 to 139 (NKVD) is G4. Positions 174–176 (SAR) are G5.

Belongs to the TRAFAC class translation factor GTPase superfamily. Classic translation factor GTPase family. EF-Tu/EF-1A subfamily. Monomer.

Its subcellular location is the cytoplasm. The catalysed reaction is GTP + H2O = GDP + phosphate + H(+). Its function is as follows. GTP hydrolase that promotes the GTP-dependent binding of aminoacyl-tRNA to the A-site of ribosomes during protein biosynthesis. This is Elongation factor Tu from Chloroflexus aurantiacus (strain ATCC 29366 / DSM 635 / J-10-fl).